The chain runs to 152 residues: HTH-type transcriptional regulator SlrR (152 aa).

Residues 6-61 (IRLYRKRKGYSINQLAVESGVSKSYLSKIERGVHTNPSVQFLKKVSATLEVELTEL) form the HTH cro/C1-type domain. Residues 17-36 (INQLAVESGVSKSYLSKIER) constitute a DNA-binding region (H-T-H motif). In terms of domain architecture, Sin spans 113-151 (YRNRKLTESNIEEWKALMAEAREIGLSVHEVKSFLKTKG).

In terms of assembly, component of the SlrR/SlrA complex.

In terms of biological role, represses sigma(D)-dependent flagellar genes and activate the eps and yqxM operons. Repressor activity is regulated by SlrA. Controls the initiation of biofilm formation. This is HTH-type transcriptional regulator SlrR (slrR) from Bacillus subtilis (strain 168).